We begin with the raw amino-acid sequence, 1004 residues long: Ovochymase-2 (1004 aa).

A signal peptide spans 1–19 (MPTRNLLLGSILLSLAVKG). The propeptide at 20-45 (DPGPHRGARCGVSPLGSATELNYLSR) is activation peptide. Positions 46-295 (IVGGRESKKG…LLGWVSSQLN (250 aa)) constitute a Peptidase S1 1 domain. A disulfide bridge links cysteine 71 with cysteine 87. Catalysis depends on histidine 86, which acts as the Charge relay system. Glutamate 113 provides a ligand contact to Ca(2+). Asparagine 128 is a glycosylation site (N-linked (GlcNAc...) asparagine). The Charge relay system role is filled by aspartate 136. 3 disulfides stabilise this stretch: cysteine 170–cysteine 240, cysteine 201–cysteine 219, and cysteine 230–cysteine 259. The active-site Charge relay system is the serine 234. 2 CUB domains span residues 309-419 (QDGV…YSAV) and 429-541 (CGSF…FTFV). Asparagine 351 carries N-linked (GlcNAc...) asparagine glycosylation. The cysteines at positions 363 and 382 are disulfide-linked. A glycan (N-linked (GlcNAc...) asparagine) is linked at asparagine 408. 2 cysteine pairs are disulfide-bonded: cysteine 429-cysteine 456 and cysteine 483-cysteine 504. Over residues 547-558 (VEDSRQGNMPST) the composition is skewed to polar residues. The tract at residues 547–566 (VEDSRQGNMPSTNKKETTAQ) is disordered. The 241-residue stretch at 580–820 (IYNSIAKVEE…FIDWIRQIMS (241 aa)) folds into the Peptidase S1 2 domain. A propeptide spans 584–1004 (IAKVEEAVPH…VVPDSDSSEP (421 aa)) (activation peptide). Intrachain disulfides connect cysteine 609-cysteine 625, cysteine 706-cysteine 776, cysteine 737-cysteine 754, and cysteine 766-cysteine 796. Asparagine 763 carries N-linked (GlcNAc...) asparagine glycosylation. N-linked (GlcNAc...) asparagine glycosylation occurs at asparagine 940.

It belongs to the peptidase S1 family. The catalytically inactive 110 kDa form is processed both N- and C-terminally to give rise to the 66 kDa catalytically active form. In terms of tissue distribution, specifically expressed in the pars recta oviduct.

It is found in the secreted. The catalysed reaction is Preferential cleavage at 371-Gly-Ser-Arg-|-Trp-374 of glycoprotein gp43 in Xenopus laevis coelemic egg envelope to yield gp41.. Converts the glycoprotein envelope surrounding the egg from an unfertilizable to a fertilizable form during its transit through the pars recta portion of the oviduct by selectively hydrolyzing the envelope glycoprotein gp43. The egg envelope is converted to a sperm-penetrable form, via an increase in sperm binding. The sequence is that of Ovochymase-2 (ovch2) from Xenopus laevis (African clawed frog).